The sequence spans 497 residues: Acetyl-coenzyme A carboxylase carboxyl transferase subunit beta, chloroplastic (497 aa).

Residues 225-497 (LWVQCENCYG…LHGFLPLNQD (273 aa)) enclose the CoA carboxyltransferase N-terminal domain. 4 residues coordinate Zn(2+): cysteine 229, cysteine 232, cysteine 248, and cysteine 251. A C4-type zinc finger spans residues 229-251 (CENCYGLNYKKFFSSKMNICEYC).

Belongs to the AccD/PCCB family. In terms of assembly, acetyl-CoA carboxylase is a heterohexamer composed of biotin carboxyl carrier protein, biotin carboxylase and 2 subunits each of ACCase subunit alpha and ACCase plastid-coded subunit beta (accD). Zn(2+) serves as cofactor.

The protein localises to the plastid. It is found in the chloroplast stroma. It catalyses the reaction N(6)-carboxybiotinyl-L-lysyl-[protein] + acetyl-CoA = N(6)-biotinyl-L-lysyl-[protein] + malonyl-CoA. It participates in lipid metabolism; malonyl-CoA biosynthesis; malonyl-CoA from acetyl-CoA: step 1/1. Its function is as follows. Component of the acetyl coenzyme A carboxylase (ACC) complex. Biotin carboxylase (BC) catalyzes the carboxylation of biotin on its carrier protein (BCCP) and then the CO(2) group is transferred by the transcarboxylase to acetyl-CoA to form malonyl-CoA. The chain is Acetyl-coenzyme A carboxylase carboxyl transferase subunit beta, chloroplastic from Phalaenopsis aphrodite subsp. formosana (Moth orchid).